Here is a 1072-residue protein sequence, read N- to C-terminus: Carbamoyl phosphate synthase large chain (1072 aa).

The interval 1–401 (MPKYKDISKV…SLLKAVRSLE (401 aa)) is carboxyphosphate synthetic domain. 12 residues coordinate ATP: Arg129, Arg169, Gly175, Gly176, Lys208, Leu210, Glu215, Gly241, Val242, His243, Gln284, and Glu298. In terms of domain architecture, ATP-grasp 1 spans 133–327 (KRKMQEIGEP…IAKIAAKIAI (195 aa)). Mg(2+)-binding residues include Gln284, Glu298, and Asn300. Gln284, Glu298, and Asn300 together coordinate Mn(2+). The interval 402–544 (IKAYGLRLDS…YIYSTYCEED (143 aa)) is oligomerization domain. Residues 545–929 (EVETHDIPKV…ALYKALEGAG (385 aa)) form a carbamoyl phosphate synthetic domain region. The ATP-grasp 2 domain maps to 671–861 (SKLLKELNIN…MVKLAVEVAL (191 aa)). The ATP site is built by Arg707, Lys746, Ile748, Glu752, Gly777, Val778, His779, Ser780, Gln820, and Glu832. Residues Gln820, Glu832, and Asn834 each contribute to the Mg(2+) site. 3 residues coordinate Mn(2+): Gln820, Glu832, and Asn834. An MGS-like domain is found at 930 to 1072 (LKIPKKGKIL…QKDNVKNLVL (143 aa)). Positions 930–1072 (LKIPKKGKIL…QKDNVKNLVL (143 aa)) are allosteric domain.

This sequence belongs to the CarB family. As to quaternary structure, composed of two chains; the small (or glutamine) chain promotes the hydrolysis of glutamine to ammonia, which is used by the large (or ammonia) chain to synthesize carbamoyl phosphate. Tetramer of heterodimers (alpha,beta)4. The cofactor is Mg(2+). Requires Mn(2+) as cofactor.

It catalyses the reaction hydrogencarbonate + L-glutamine + 2 ATP + H2O = carbamoyl phosphate + L-glutamate + 2 ADP + phosphate + 2 H(+). It carries out the reaction hydrogencarbonate + NH4(+) + 2 ATP = carbamoyl phosphate + 2 ADP + phosphate + 2 H(+). The protein operates within amino-acid biosynthesis; L-arginine biosynthesis; carbamoyl phosphate from bicarbonate: step 1/1. It functions in the pathway pyrimidine metabolism; UMP biosynthesis via de novo pathway; (S)-dihydroorotate from bicarbonate: step 1/3. In terms of biological role, large subunit of the glutamine-dependent carbamoyl phosphate synthetase (CPSase). CPSase catalyzes the formation of carbamoyl phosphate from the ammonia moiety of glutamine, carbonate, and phosphate donated by ATP, constituting the first step of 2 biosynthetic pathways, one leading to arginine and/or urea and the other to pyrimidine nucleotides. The large subunit (synthetase) binds the substrates ammonia (free or transferred from glutamine from the small subunit), hydrogencarbonate and ATP and carries out an ATP-coupled ligase reaction, activating hydrogencarbonate by forming carboxy phosphate which reacts with ammonia to form carbamoyl phosphate. The polypeptide is Carbamoyl phosphate synthase large chain (Caldanaerobacter subterraneus subsp. tengcongensis (strain DSM 15242 / JCM 11007 / NBRC 100824 / MB4) (Thermoanaerobacter tengcongensis)).